A 249-amino-acid chain; its full sequence is 2,5-diamino-6-ribosylamino-4(3H)-pyrimidinone 5'-phosphate reductase (249 aa).

NADP(+)-binding positions include Thr79, Asp83, Met164, and 187-191 (GGIVI).

It belongs to the HTP reductase family. Homodimer.

It catalyses the reaction 2,5-diamino-6-(1-D-ribitylamino)pyrimidin-4(3H)-one 5'-phosphate + NADP(+) = 2,5-diamino-6-(1-D-ribosylamino)pyrimidin-4(3H)-one 5'-phosphate + NADPH + H(+). The catalysed reaction is 2,5-diamino-6-(1-D-ribitylamino)pyrimidin-4(3H)-one 5'-phosphate + NAD(+) = 2,5-diamino-6-(1-D-ribosylamino)pyrimidin-4(3H)-one 5'-phosphate + NADH + H(+). It functions in the pathway cofactor biosynthesis; riboflavin biosynthesis. Its function is as follows. Catalyzes an early step in riboflavin biosynthesis, the NADPH-dependent reduction of the ribose side chain of 2,5-diamino-6-ribosylamino-4(3H)-pyrimidinone 5'-phosphate, yielding 2,5-diamino-6-ribitylamino-4(3H)-pyrimidinone 5'-phosphate. This Kluyveromyces marxianus (Yeast) protein is 2,5-diamino-6-ribosylamino-4(3H)-pyrimidinone 5'-phosphate reductase (RIB7).